The primary structure comprises 258 residues: (7aS)-7a-methyl-1,5-dioxo-2,3,5,6,7,7a-hexahydro-1H-indene-carboxyl-CoA hydrolase (258 aa).

The protein belongs to the enoyl-CoA hydratase/isomerase family.

The catalysed reaction is (7aS)-7a-methyl-1,5-dioxo-2,3,5,6,7,7a-hexahydro-1H-indene-carboxyl-CoA + H2O = (3E)-2-(2-carboxylatoethyl)-3-methyl-6-oxocyclohex-1-ene-1-carboxyl-CoA + H(+). The protein operates within steroid metabolism; cholesterol degradation. Its function is as follows. Involved in the final steps of cholesterol and steroid degradation. Catalyzes the hydrolytic ring D opening of (7aS)-7a-methyl-1,5-dioxo-2,3,5,6,7,7a-hexahydro-1H-indene-carboxyl-CoA (HIEC-CoA) to (3E)-2-(2-carboxylatoethyl)-3-methyl-6-oxocyclohex-1-ene-1-carboxyl-CoA (COCHEA-CoA). This is (7aS)-7a-methyl-1,5-dioxo-2,3,5,6,7,7a-hexahydro-1H-indene-carboxyl-CoA hydrolase from Rhodococcus jostii (strain RHA1).